A 413-amino-acid chain; its full sequence is Clusterin-associated protein 1 (413 aa).

The stretch at 185 to 308 (MRIAIKDLLA…KEEEKRLLKS (124 aa)) forms a coiled coil. A disordered region spans residues 303–413 (KRLLKSGSND…EPLDESDNDF (111 aa)). Composition is skewed to acidic residues over residues 312-328 (DDSDIDIQEDDESDSEL) and 360-388 (DSDEDEDSEDSEIDMEDDEEDDDDLEDES). Residues serine 314, serine 324, and serine 326 each carry the phosphoserine modification. The residue at position 409 (serine 409) is a Phosphoserine.

Belongs to the CLUAP1 family. As to quaternary structure, interacts with CLU/clusterin. Interacts with UBXN10; the interaction is direct. Expressed in all tissues tested including heart, kidney, skeletal muscle, eye, liver, ovary, oviduct, testes, lung and brain. Elevated levels in multiciliated cells such as the bronchioles of the lungs, ependymal cells of the brain and cells with a single primary cilia of heart and kidney.

The protein localises to the cell projection. It localises to the cilium. The protein resides in the nucleus. Functionally, required for cilia biogenesis. Appears to function within the multiple intraflagellar transport complex B (IFT-B). Key regulator of hedgehog signaling. This chain is Clusterin-associated protein 1 (Cluap1), found in Mus musculus (Mouse).